The primary structure comprises 67 residues: V-type proton ATPase subunit e (67 aa).

The Lumenal segment spans residues 1-2 (MG). A helical transmembrane segment spans residues 3-23 (GLVVLLVGLLTALMSVVSYYV). Residues 24 to 35 (SPKGNNTSTWQM) lie on the Cytoplasmic side of the membrane. Residues 36 to 56 (SLILTFSCCYLLWAITYLAQL) traverse the membrane as a helical segment. Residues 57 to 67 (HPLEAPSRVLE) lie on the Lumenal side of the membrane.

This sequence belongs to the V-ATPase e1/e2 subunit family. V-ATPase is a heteromultimeric enzyme composed of a peripheral catalytic V1 complex (components A to H) attached to an integral membrane V0 proton pore complex (components: a, c, c', c'', d, e, f and VOA1).

It is found in the vacuole membrane. Subunit of the V0 complex of vacuolar(H+)-ATPase (V-ATPase), a multisubunit enzyme composed of a peripheral complex (V1) that hydrolyzes ATP and a membrane integral complex (V0) that translocates protons. V-ATPase is responsible for acidifying and maintaining the pH of intracellular compartments. The polypeptide is V-type proton ATPase subunit e (vma9) (Schizosaccharomyces pombe (strain 972 / ATCC 24843) (Fission yeast)).